The sequence spans 613 residues: ATP-dependent RNA helicase DeaD (613 aa).

The short motif at 5–33 (ITFNDLGLPEFILKAVSDLGFETPSPIQQ) is the Q motif element. The Helicase ATP-binding domain maps to 36–207 (IPHLLNGNDV…KRFMNDPQEV (172 aa)). Residue 49-56 (AQTGSGKT) coordinates ATP. The short motif at 155–158 (DEAD) is the DEAD box element. The Helicase C-terminal domain maps to 231 to 378 (KNEALLRFLE…EVELPNHLVL (148 aa)). Disordered stretches follow at residues 434-476 (ILPP…PQPM) and 552-613 (AVKS…RSSF). 2 stretches are compositionally biased toward basic and acidic residues: residues 440 to 469 (PMEKRRRERNDRGDRRENPRSAERRGERKG) and 556 to 613 (DNSR…RSSF).

This sequence belongs to the DEAD box helicase family. DeaD/CsdA subfamily.

Its subcellular location is the cytoplasm. The catalysed reaction is ATP + H2O = ADP + phosphate + H(+). DEAD-box RNA helicase involved in various cellular processes at low temperature, including ribosome biogenesis, mRNA degradation and translation initiation. The protein is ATP-dependent RNA helicase DeaD of Haemophilus influenzae (strain ATCC 51907 / DSM 11121 / KW20 / Rd).